The chain runs to 367 residues: Flagellar P-ring protein (367 aa).

Positions 1–21 (MYVFKALAGIVLALVATLAHA) are cleaved as a signal peptide.

This sequence belongs to the FlgI family. In terms of assembly, the basal body constitutes a major portion of the flagellar organelle and consists of four rings (L,P,S, and M) mounted on a central rod.

It is found in the periplasm. The protein localises to the bacterial flagellum basal body. Its function is as follows. Assembles around the rod to form the L-ring and probably protects the motor/basal body from shearing forces during rotation. In Salmonella paratyphi C (strain RKS4594), this protein is Flagellar P-ring protein.